The chain runs to 155 residues: Large ribosomal subunit protein uL16m (155 aa).

The protein belongs to the universal ribosomal protein uL16 family.

Its subcellular location is the mitochondrion. This Petunia hybrida (Petunia) protein is Large ribosomal subunit protein uL16m (RPL16).